Here is a 103-residue protein sequence, read N- to C-terminus: MALLRGNSLAISQKMLSVFQASALPHISLRIFISPPSIANIWNSILLAVPKKKTSYTKKRSRLLSGKALKDKTVNRCPICGSFKLAHHLCSHCFRNIRREFNE.

A mitochondrion-targeting transit peptide spans M1–L47. C77, C80, C90, and C93 together coordinate Zn(2+).

This sequence belongs to the bacterial ribosomal protein bL32 family. Component of the mitochondrial large ribosomal subunit (mt-LSU). Mature yeast 74S mitochondrial ribosomes consist of a small (37S) and a large (54S) subunit. The 37S small subunit contains a 15S ribosomal RNA (15S mt-rRNA) and at least 32 different proteins. The 54S large subunit contains a 21S rRNA (21S mt-rRNA) and at least 45 different proteins. bL32m has a zinc binding site. MRPL32 precursor is processed by the m-AAA protease, which cleaves the N-terminal transit peptide. Cleavage by the m-AAA protease takes place prior to assembly into the large subunit, an essential step for mitochondrial ribosome (mitoribosome) assembly. Proper processing by the m-AAA protease is dependent on the zinc-binding region within the tightly folded C-terminal domain of MRPL32: zinc-dependent folding halts degradation initiated from the N-terminus and triggers the release of mature mrpl32.

Its subcellular location is the mitochondrion. In terms of biological role, component of the mitochondrial ribosome (mitoribosome), a dedicated translation machinery responsible for the synthesis of mitochondrial genome-encoded proteins, including at least some of the essential transmembrane subunits of the mitochondrial respiratory chain. The mitoribosomes are attached to the mitochondrial inner membrane and translation products are cotranslationally integrated into the membrane. The polypeptide is Large ribosomal subunit protein bL32m (mrpl32) (Schizosaccharomyces pombe (strain 972 / ATCC 24843) (Fission yeast)).